A 455-amino-acid chain; its full sequence is MKKQTQLLSALALSVGLTLSASFQAVASIPGQVADQAPLPSLAPMLEKVLPAVVSVRVEGTASQGQKIPEEFKKFFGDDLPDQPAQPFEGLGSGVIINASKGYVLTNNHVINQAQKISIQLNDGREFDAKLIGSDDQSDIALLQIQNPSKLTQIAIADSDKLRVGDFAVAVGNPFGLGQTATSGIVSALGRSGLNLEGLENFIQTDASINRGNSGGALLNLNGELIGINTAILAPGGGSVGIGFAIPSNMARTLAQQLIDFGEIKRGLLGIKGTEMSADIAKAFNLDVQRGAFVSEVLPGSGSAKAGVKAGDIITSLNGKPLNSFAELRSRIATTEPGTKVKLGLLRNGKPLEVEVTLDTSTSSSASAEMITPALEGATLSDGQLKDGGKGIKIDEVVKGSPAAQAGLQKDDVIIGVNRDRVNSIAEMRKVLAAKPAIIALQIVRGNESIYLLMR.

Residues 1-27 form the signal peptide; it reads MKKQTQLLSALALSVGLTLSASFQAVA. Substrate contacts are provided by residues glutamate 59, histidine 109, aspartate 139, glycine 212, 212 to 214, 230 to 234, and 269 to 273; these read GNS, TAILA, and LGIKG. Active-site charge relay system residues include histidine 109 and aspartate 139. Serine 214 functions as the Charge relay system in the catalytic mechanism. PDZ domains lie at 258-349 and 355-447; these read LIDF…LRNG and EVTL…VRGN.

This sequence belongs to the peptidase S1C family. DegQ can reversibly switch between different oligomeric forms that represent inactive (6-mer) and active (12- and 24-mer) protease states. Substrate binding triggers the conversion of the resting DegQ trimer and hexamer into catalytically active 12- and 24-mers. The conversion of 6-mer (DegQ6) into 12-mer (DegQ12) or 24-mer (DegQ24) is crucial in regulating protease activity.

The protein resides in the periplasm. The catalysed reaction is Acts on substrates that are at least partially unfolded. The cleavage site P1 residue is normally between a pair of hydrophobic residues, such as Val-|-Val.. Inhibited by diisopropylfluorophosphate (DFP). Its function is as follows. DegQ could degrade transiently denatured and unfolded proteins which accumulate in the periplasm following stress conditions. DegQ is efficient with Val-Xaa and Ile-Xaa peptide bonds, suggesting a preference for a beta-branched side chain amino acids. Only unfolded proteins devoid of disulfide bonds appear capable to be cleaved, thereby preventing non-specific proteolysis of folded proteins. DegQ can substitute for the periplasmic protease DegP. The protein is Periplasmic pH-dependent serine endoprotease DegQ (degQ) of Escherichia coli (strain K12).